A 178-amino-acid chain; its full sequence is Putative RING-H2 finger protein ATL19 (178 aa).

The helical transmembrane segment at 11–31 (LISVLGLAVFIGLCILLVVLI) threads the bilayer. An RING-type; atypical zinc finger spans residues 130-172 (CAICLSGYVVNEECRVFPVCRHIYHALCIDAWLKNHLTCPTCR).

The protein belongs to the RING-type zinc finger family. ATL subfamily.

It localises to the membrane. The catalysed reaction is S-ubiquitinyl-[E2 ubiquitin-conjugating enzyme]-L-cysteine + [acceptor protein]-L-lysine = [E2 ubiquitin-conjugating enzyme]-L-cysteine + N(6)-ubiquitinyl-[acceptor protein]-L-lysine.. Its pathway is protein modification; protein ubiquitination. The chain is Putative RING-H2 finger protein ATL19 (ATL19) from Arabidopsis thaliana (Mouse-ear cress).